The following is a 152-amino-acid chain: Nucleoside diphosphate kinase B (152 aa).

The segment at 1-66 (MANLERTFIA…DRPFFPGLVK (66 aa)) is interaction with AKAP13. Residues lysine 12, phenylalanine 60, arginine 88, threonine 94, arginine 105, and asparagine 115 each contribute to the ATP site. The Pros-phosphohistidine intermediate role is filled by histidine 118.

Belongs to the NDK family. In terms of assembly, hexamer of two different chains: An and B (A6, A5B, A4B2, A3B3, A2B4, AB5, B6). Interacts with CAPN8. Interacts with AKAP13. Interacts with ITGB1BP1 (via C-terminal domain region). Interacts with BCL2L10. Mg(2+) is required as a cofactor. Post-translationally, the N-terminus is blocked.

The protein resides in the cytoplasm. The protein localises to the cell projection. It localises to the lamellipodium. Its subcellular location is the ruffle. It is found in the nucleus. It catalyses the reaction a 2'-deoxyribonucleoside 5'-diphosphate + ATP = a 2'-deoxyribonucleoside 5'-triphosphate + ADP. It carries out the reaction a ribonucleoside 5'-diphosphate + ATP = a ribonucleoside 5'-triphosphate + ADP. The catalysed reaction is ATP + protein L-histidine = ADP + protein N-phospho-L-histidine.. Functionally, major role in the synthesis of nucleoside triphosphates other than ATP. The ATP gamma phosphate is transferred to the NDP beta phosphate via a ping-pong mechanism, using a phosphorylated active-site intermediate. Negatively regulates Rho activity by interacting with AKAP13/LBC. Acts as a transcriptional activator of the MYC gene; binds DNA non-specifically. Binds to both single-stranded guanine- and cytosine-rich strands within the nuclease hypersensitive element (NHE) III(1) region of the MYC gene promoter. Does not bind to duplex NHE III(1). Has G-quadruplex (G4) DNA-binding activity, which is independent of its nucleotide-binding and kinase activity. Binds both folded and unfolded G4 with similar low nanomolar affinities. Stabilizes folded G4s regardless of whether they are prefolded or not. Exhibits histidine protein kinase activity. This Rattus norvegicus (Rat) protein is Nucleoside diphosphate kinase B (Nme2).